Here is a 209-residue protein sequence, read N- to C-terminus: NADH-ubiquinone oxidoreductase subunit 9 (209 aa).

Belongs to the complex I 30 kDa subunit family. In terms of assembly, complex I is composed of about 45 different subunits.

The protein resides in the mitochondrion inner membrane. The catalysed reaction is a ubiquinone + NADH + 5 H(+)(in) = a ubiquinol + NAD(+) + 4 H(+)(out). Its function is as follows. Core subunit of the mitochondrial membrane respiratory chain NADH dehydrogenase (Complex I) that is believed to belong to the minimal assembly required for catalysis. Complex I functions in the transfer of electrons from NADH to the respiratory chain. The immediate electron acceptor for the enzyme is believed to be ubiquinone. This is NADH-ubiquinone oxidoreductase subunit 9 (nad9) from Dictyostelium discoideum (Social amoeba).